A 667-amino-acid chain; its full sequence is Long-chain-fatty-acid--CoA ligase ACSBG2 (667 aa).

Basic and acidic residues predominate over residues 1-14; the sequence is MTQEKKAEDPDRGM. The segment at 1–20 is disordered; the sequence is MTQEKKAEDPDRGMDTTSAA. ATP is bound by residues 227-235, 418-423, Asp-496, Arg-511, and Arg-624; these read TSGTTGSPK and EIYGMT.

This sequence belongs to the ATP-dependent AMP-binding enzyme family. Bubblegum subfamily.

The protein localises to the cytoplasm. The protein resides in the membrane. The enzyme catalyses a long-chain fatty acid + ATP + CoA = a long-chain fatty acyl-CoA + AMP + diphosphate. It carries out the reaction (5Z,8Z,11Z,14Z)-eicosatetraenoate + ATP + CoA = (5Z,8Z,11Z,14Z)-eicosatetraenoyl-CoA + AMP + diphosphate. The catalysed reaction is hexadecanoate + ATP + CoA = hexadecanoyl-CoA + AMP + diphosphate. It catalyses the reaction (9Z)-octadecenoate + ATP + CoA = (9Z)-octadecenoyl-CoA + AMP + diphosphate. The enzyme catalyses (9Z,12Z)-octadecadienoate + ATP + CoA = (9Z,12Z)-octadecadienoyl-CoA + AMP + diphosphate. It carries out the reaction tetracosanoate + ATP + CoA = tetracosanoyl-CoA + AMP + diphosphate. Functionally, catalyzes the conversion of fatty acids such as long chain and very long-chain fatty acids to their active form acyl-CoAs for both synthesis of cellular lipids, and degradation via beta-oxidation. Can activate diverse saturated, monosaturated and polyunsaturated fatty acids. Has increased ability to activate oleic and linoleic acid. May play a role in spermatogenesis. This chain is Long-chain-fatty-acid--CoA ligase ACSBG2, found in Rattus norvegicus (Rat).